A 370-amino-acid chain; its full sequence is 3-isopropylmalate dehydrogenase (370 aa).

77–90 (GPKWDGVPYEHRPE) lines the NAD(+) pocket. Substrate contacts are provided by Arg-97, Arg-107, Arg-135, and Asp-226. Residues Asp-226, Asp-250, and Asp-254 each coordinate Mg(2+). 290 to 302 (GSAPDIAGKSIAN) provides a ligand contact to NAD(+).

The protein belongs to the isocitrate and isopropylmalate dehydrogenases family. LeuB type 1 subfamily. As to quaternary structure, homodimer. It depends on Mg(2+) as a cofactor. Requires Mn(2+) as cofactor.

Its subcellular location is the cytoplasm. The enzyme catalyses (2R,3S)-3-isopropylmalate + NAD(+) = 4-methyl-2-oxopentanoate + CO2 + NADH. Its pathway is amino-acid biosynthesis; L-leucine biosynthesis; L-leucine from 3-methyl-2-oxobutanoate: step 3/4. In terms of biological role, catalyzes the oxidation of 3-carboxy-2-hydroxy-4-methylpentanoate (3-isopropylmalate) to 3-carboxy-4-methyl-2-oxopentanoate. The product decarboxylates to 4-methyl-2 oxopentanoate. The sequence is that of 3-isopropylmalate dehydrogenase (leuB) from Agrobacterium fabrum (strain C58 / ATCC 33970) (Agrobacterium tumefaciens (strain C58)).